We begin with the raw amino-acid sequence, 1544 residues long: Lysophospholipase NTE1 (1544 aa).

Residues 1-37 are Cytoplasmic-facing; that stretch reads MSTIEIVSTVAEYTEIHSPVSSKFLLPSARDSSSSIS. The helical transmembrane segment at 38–58 threads the bilayer; sequence LFSAIFWFWSWLFFKIMNIFL. At 59-76 the chain is on the lumenal side; the sequence is YYIPNIIVNLFSVNFQIT. The helical transmembrane segment at 77 to 97 threads the bilayer; it reads LSLSSIVITLTGIISFCFLIV. Residues 98-1544 lie on the Cytoplasmic side of the membrane; that stretch reads RYKYLTRYSK…RKSLYRRSSI (1447 aa). Disordered stretches follow at residues 265–312 and 424–552; these read RLFS…RNYP and ESPS…EETE. Polar residues predominate over residues 275-310; it reads NPASNPLSPDNTGSKSFDPLSSGNFNDTSLSSSDRN. The segment covering 425 to 447 has biased composition (low complexity); it reads SPSVSINKTSSSSSSLPKKSTTS. Composition is skewed to polar residues over residues 448-458 and 517-536; these read LRPLNRNQSSR and QISS…TTKF. The segment covering 537-546 has biased composition (basic and acidic residues); sequence ENIRDRTFSD. Residues 681 to 811 and 807 to 960 each bind a nucleoside 3',5'-cyclic phosphate; these read SFES…LKSL and KLKS…VANK. The 165-residue stretch at 1237 to 1401 folds into the PNPLA domain; it reads LVLGGGGSRG…LDNLPVMEMK (165 aa). The short motif at 1241–1246 is the GXGXXG element; that stretch reads GGGSRG. Positions 1268 to 1272 match the GXSXG motif; it reads GTSIG. Serine 1270 acts as the Nucleophile in catalysis. Aspartate 1388 functions as the Proton acceptor in the catalytic mechanism. The DGA/G signature appears at 1388–1390; the sequence is DGG.

This sequence belongs to the NTE family.

It localises to the endoplasmic reticulum membrane. The enzyme catalyses a 1-acyl-sn-glycero-3-phosphocholine + H2O = sn-glycerol 3-phosphocholine + a fatty acid + H(+). With respect to regulation, inhibited by organophosphorus esters. Intracellular phospholipase B that catalyzes the double deacylation of phosphatidylcholine (PC) to glycerophosphocholine (GroPCho). Plays an important role in membrane lipid homeostasis. Responsible for the rapid PC turnover in response to inositol, elevated temperatures, or when choline is present in the growth medium. The sequence is that of Lysophospholipase NTE1 (NTE1) from Debaryomyces hansenii (strain ATCC 36239 / CBS 767 / BCRC 21394 / JCM 1990 / NBRC 0083 / IGC 2968) (Yeast).